The chain runs to 629 residues: tRNA uridine 5-carboxymethylaminomethyl modification enzyme MnmG (629 aa).

FAD is bound by residues 13-18 (GGGHAG), Val125, and Ser180. 273-287 (GPRYCPSIEDKVMRF) lines the NAD(+) pocket. An FAD-binding site is contributed by Gln370.

Belongs to the MnmG family. Homodimer. Heterotetramer of two MnmE and two MnmG subunits. Requires FAD as cofactor.

The protein resides in the cytoplasm. NAD-binding protein involved in the addition of a carboxymethylaminomethyl (cmnm) group at the wobble position (U34) of certain tRNAs, forming tRNA-cmnm(5)s(2)U34. The sequence is that of tRNA uridine 5-carboxymethylaminomethyl modification enzyme MnmG from Salmonella choleraesuis (strain SC-B67).